The sequence spans 523 residues: Ribosomal protein uS12 methylthiotransferase RimO (523 aa).

The MTTase N-terminal domain occupies Arg7–Ala134. 6 residues coordinate [4Fe-4S] cluster: Cys16, Cys52, Cys97, Cys192, Cys196, and Cys199. Residues Leu178–Arg409 enclose the Radical SAM core domain. The region spanning Asp411 to Ala492 is the TRAM domain.

Belongs to the methylthiotransferase family. RimO subfamily. [4Fe-4S] cluster serves as cofactor.

The protein localises to the cytoplasm. The catalysed reaction is L-aspartate(89)-[ribosomal protein uS12]-hydrogen + (sulfur carrier)-SH + AH2 + 2 S-adenosyl-L-methionine = 3-methylsulfanyl-L-aspartate(89)-[ribosomal protein uS12]-hydrogen + (sulfur carrier)-H + 5'-deoxyadenosine + L-methionine + A + S-adenosyl-L-homocysteine + 2 H(+). Functionally, catalyzes the methylthiolation of an aspartic acid residue of ribosomal protein uS12. The chain is Ribosomal protein uS12 methylthiotransferase RimO from Frankia casuarinae (strain DSM 45818 / CECT 9043 / HFP020203 / CcI3).